We begin with the raw amino-acid sequence, 164 residues long: Protein HIT1 (164 aa).

Cys8, Cys11, Cys28, and Cys32 together coordinate Zn(2+). The HIT-type; degenerate zinc finger occupies 8-49 (CGICRGVDGKYKCPKCGVRYCSLKCYKDAAKHVHKESEQPRA).

The protein is Protein HIT1 (HIT1) of Saccharomyces cerevisiae (strain ATCC 204508 / S288c) (Baker's yeast).